A 158-amino-acid polypeptide reads, in one-letter code: Putative pre-16S rRNA nuclease (158 aa).

The protein belongs to the YqgF nuclease family.

It localises to the cytoplasm. Functionally, could be a nuclease involved in processing of the 5'-end of pre-16S rRNA. In Acidiphilium cryptum (strain JF-5), this protein is Putative pre-16S rRNA nuclease.